Reading from the N-terminus, the 396-residue chain is Decapping and exoribonuclease protein (396 aa).

The segment covering 1 to 20 (MDPRGTKRGAEKTEVAEPRN) has biased composition (basic and acidic residues). The disordered stretch occupies residues 1–37 (MDPRGTKRGAEKTEVAEPRNKLPRPAPSLPTDPALYS). Substrate is bound by residues Arg-58, Glu-101, and 131-133 (WRG). Position 192 (Glu-192) interacts with Mg(2+). Residues Cys-217 and Glu-234 each coordinate substrate. Glu-234, Asp-236, Glu-253, and Leu-254 together coordinate Mg(2+). The substrate site is built by Lys-255 and Gln-280. Position 392 is a phosphothreonine (Thr-392). A Phosphoserine modification is found at Ser-394.

Belongs to the DXO/Dom3Z family. Requires Mg(2+) as cofactor. In terms of tissue distribution, ubiquitously expressed.

The protein resides in the nucleus. The catalysed reaction is a 5'-end triphospho-ribonucleoside in mRNA + H2O = a 5'-end phospho-ribonucleoside in mRNA + diphosphate + H(+). The enzyme catalyses a 5'-end NAD(+)-phospho-ribonucleoside in mRNA + H2O = a 5'-end phospho-ribonucleoside in mRNA + NAD(+) + H(+). It catalyses the reaction a 5'-end NAD(+)-phospho-ribonucleoside in snoRNA + H2O = a 5'-end phospho-ribonucleoside in snoRNA + NAD(+) + H(+). It carries out the reaction a 5'-end (N(7)-methyl 5'-triphosphoguanosine)-ribonucleoside-ribonucleotide in mRNA + H2O = a (N(7)-methyl 5'-triphosphoguanosine)-nucleoside + a 5'-end phospho-ribonucleoside in mRNA + H(+). The catalysed reaction is a 5'-end FAD-phospho-ribonucleoside in mRNA + H2O = a 5'-end phospho-ribonucleoside in mRNA + FAD + H(+). The enzyme catalyses a 5'-end CoA-ribonucleoside in mRNA + H2O = 3'-dephospho-CoA + a 5'-end phospho-ribonucleoside in mRNA + H(+). Functionally, decapping enzyme for NAD-capped RNAs: specifically hydrolyzes the nicotinamide adenine dinucleotide (NAD) cap from a subset of RNAs by removing the entire NAD moiety from the 5'-end of an NAD-capped RNA. The NAD-cap is present at the 5'-end of some RNAs and snoRNAs. In contrast to the canonical 5'-end N7 methylguanosine (m7G) cap, the NAD cap promotes mRNA decay. Preferentially acts on NAD-capped transcripts in response to environmental stress. Also acts as a non-canonical decapping enzyme that removes the entire cap structure of m7G capped or incompletely capped RNAs and mediates their subsequent degradation. Specifically degrades pre-mRNAs with a defective 5'-end m7G cap and is part of a pre-mRNA capping quality control. Has decapping activity toward incomplete 5'-end m7G cap mRNAs such as unmethylated 5'-end-capped RNA (cap0), while it has no activity toward 2'-O-ribose methylated m7G cap (cap1). In contrast to canonical decapping enzymes DCP2 and NUDT16, which cleave the cap within the triphosphate linkage, the decapping activity releases the entire cap structure GpppN and a 5'-end monophosphate RNA. Also has 5'-3' exoribonuclease activities: The 5'-end monophosphate RNA is then degraded by the 5'-3' exoribonuclease activity, enabling this enzyme to decap and degrade incompletely capped mRNAs. Also possesses RNA 5'-pyrophosphohydrolase activity by hydrolyzing the 5'-end triphosphate to release pyrophosphates. Exhibits decapping activity towards FAD-capped RNAs. Exhibits decapping activity towards dpCoA-capped RNAs in vitro. The polypeptide is Decapping and exoribonuclease protein (Homo sapiens (Human)).